A 223-amino-acid chain; its full sequence is MLDRDGFRPNVGIILLNQRNQVFWGKRIRTHSWQFPQGGIDRGESPEQAMFRELHEEVGLHPEHVRIVARTRDWLRYEVPDRFIRRDARGHYKGQKQIWYLLQLIGHDWDLNLRATDHPEFDAWRWHDYWVPLDVVVEFKRGVYEMALTELARYLPRQDFRNRFLRSNVRAREFERHMPDGGAPAGLDLPPGGSFDPHPDITSASDDPSPPPHNKAPFLPSQR.

Residues 6–149 form the Nudix hydrolase domain; sequence GFRPNVGIIL…KRGVYEMALT (144 aa). A Nudix box motif is present at residues 38–59; sequence GGIDRGESPEQAMFRELHEEVG. Residues 175–223 are disordered; it reads ERHMPDGGAPAGLDLPPGGSFDPHPDITSASDDPSPPPHNKAPFLPSQR. Residues 180–193 are compositionally biased toward low complexity; it reads DGGAPAGLDLPPGG.

This sequence belongs to the Nudix hydrolase family. RppH subfamily. The cofactor is a divalent metal cation.

Functionally, accelerates the degradation of transcripts by removing pyrophosphate from the 5'-end of triphosphorylated RNA, leading to a more labile monophosphorylated state that can stimulate subsequent ribonuclease cleavage. In Variovorax paradoxus (strain S110), this protein is RNA pyrophosphohydrolase.